The primary structure comprises 161 residues: Regulator of ribonuclease activity A (161 aa).

Belongs to the RraA family. As to quaternary structure, homotrimer. Binds to both RNA-binding sites in the C-terminal region of Rne and to RhlB.

It localises to the cytoplasm. In terms of biological role, globally modulates RNA abundance by binding to RNase E (Rne) and regulating its endonucleolytic activity. Can modulate Rne action in a substrate-dependent manner by altering the composition of the degradosome. Modulates RNA-binding and helicase activities of the degradosome. The protein is Regulator of ribonuclease activity A of Shewanella sediminis (strain HAW-EB3).